The sequence spans 136 residues: Large ribosomal subunit protein uL16 (136 aa).

Positions methionine 1–asparagine 17 are enriched in basic residues. The tract at residues methionine 1–alanine 21 is disordered.

The protein belongs to the universal ribosomal protein uL16 family. As to quaternary structure, part of the 50S ribosomal subunit.

Binds 23S rRNA and is also seen to make contacts with the A and possibly P site tRNAs. This is Large ribosomal subunit protein uL16 from Buchnera aphidicola subsp. Acyrthosiphon kondoi (Acyrthosiphon kondoi symbiotic bacterium).